Here is a 203-residue protein sequence, read N- to C-terminus: Imidazoleglycerol-phosphate dehydratase (203 aa).

This sequence belongs to the imidazoleglycerol-phosphate dehydratase family.

The protein resides in the cytoplasm. The catalysed reaction is D-erythro-1-(imidazol-4-yl)glycerol 3-phosphate = 3-(imidazol-4-yl)-2-oxopropyl phosphate + H2O. Its pathway is amino-acid biosynthesis; L-histidine biosynthesis; L-histidine from 5-phospho-alpha-D-ribose 1-diphosphate: step 6/9. This chain is Imidazoleglycerol-phosphate dehydratase, found in Salinispora tropica (strain ATCC BAA-916 / DSM 44818 / JCM 13857 / NBRC 105044 / CNB-440).